The sequence spans 1191 residues: MEPAFPASSAGVQSQSGPEPGAGQQEPPPPATPLRPVASQSRFQVDLVTEGGGGGDGQKGQTAAQPAAAAKDKDRGDGGAAAPSPASPAAAAEPPAAAAEEAKGRFRVNFVDPASDEPPLSSQQQPPPPSSASSAHGGHQPPSESMNGYPQNGDTMMSEGSLHSSGTGAHHYYDTHTNTYYLRTFGHNTIDAVPRIDHYRHTVAQLGEKLIRPSLAELHDELDKEPFEDGYVNGEESSPAEEAVSKHVADNKGVVKFGWIKGVLVRCMLNIWGVMLFIRLSWIVGHAGIGLALLVIGTATVVTTITGLSTSAITTNGFVRGGGAYYLISRSLGPEFGGAIGLIFAFANAVAVAMYVVGFAETVRDLLVEHNALMIDEMSDIRIIGSVTIVVLFGISVAGMEWEAKAQIVLLGILLLAIVNFTVGTFIPANDKRAKGFFNYRGEIFSENFVPDFRDGEDFFSVFAIFFPAATGILAGANISGDLADPQLAIPKGTLLAILITTIVYAGAAVSVGSCIVREATGNLTDAIIPGTVTNCTNVACKLGFNFSSCATNKCSYGLMNDFQVMSLVSGFGPLITAGIFSATLSSALASLVSAPKIFQALCKDNIYPGLHVFSVGYGKNNEPLRGYVLTFFIGLGFILIAELNVIAPIISNFFLASYALINFSVFHASLAKSPGWRPAFRFYNMWISLIGAILCCGVMFVINWWAALLTNVIVLALYIYVTYKKPDVNWGSSTQALTYLNALQHAIRLTGVEDHVKNFRPQCLLMTGAPTSRPALLHLVHAFTKNVGLVVCGHVHTGPRRQALKEISTDQAKYQRWLIKNKMKAFYAPVYAEDLREGTQFLLQAVGLGRMRPNTLVFGFKKDWRQALMKDVENYINAIHDAFDYQYGVVVIRLKEGFNISHLQAQEELCTSQEKSAHPKDIVVNLEHSDADSSKPSSKSVSETNSPAVCQDQKDEEDDGKASTQPLLKKEVKDPSVPLNMTDQKLLQASSQFQKKQGKGTIDVWWLFDDGGLTLLIPYLLTTKKKWKDCKIRVFIGGKINRIDHDRRTMATLLSKFRIDFSDITVLGDMNTKPSKDNITAFEEMIEPFRLHEDDKEQEASEKMKEEEPWRITDNELEIYRMKTYRQIRLNELLRENSGTANLIVMSLPVARKGAVSSALYMAWIETLSKDLPPILLVRGNHQSVLTFYS.

The disordered stretch occupies residues Met-1–Gly-166. Topologically, residues Met-1–Gly-258 are cytoplasmic. Composition is skewed to low complexity over residues Gln-13–Gln-25, Lys-59–Ala-69, Ala-80–Ala-99, and Ser-131–Pro-141. The segment covering Pro-142–Thr-155 has biased composition (polar residues). Phosphothreonine; by OXSR1 and STK39 occurs at positions 175, 179, and 184. Phosphothreonine is present on residues Thr-189 and Thr-202. The chain crosses the membrane as a discontinuously helical span at residues Trp-259–Gly-288. Position 269 (Leu-269) interacts with Na(+). Residues Asn-270 and Ile-271 each coordinate K(+). Na(+) is bound at residue Trp-272. 3 residues coordinate chloride: Gly-273, Val-274, and Met-275. Residues Ile-289–Leu-308 traverse the membrane as a helical segment. Residues Ser-309–Ala-339 lie on the Cytoplasmic side of the membrane. A helical transmembrane segment spans residues Ile-340–Leu-367. Phe-344 contacts chloride. Tyr-355 is a K(+) binding site. The Extracellular portion of the chain corresponds to Val-368–Glu-377. The helical transmembrane segment at Met-378–Glu-401 threads the bilayer. At Trp-402–Ala-404 the chain is on the cytoplasmic side. Residues Lys-405 to Phe-426 form a helical membrane-spanning segment. Residues Ile-427–Asp-458 are Extracellular-facing. The chain crosses the membrane as a discontinuously helical span at residues Phe-459–Gly-476. Residues Pro-468, Ala-469, and Thr-471 each coordinate K(+). Positions 468 and 469 each coordinate chloride. Chloride contacts are provided by Gly-472 and Ile-473. Residues Ala-477–Pro-491 are Cytoplasmic-facing. Residues Lys-492–Gly-513 traverse the membrane as a helical segment. Residues Ser-514–Gly-571 lie on the Extracellular side of the membrane. N-linked (GlcNAc...) asparagine glycosylation is found at Asn-523 and Asn-535. Residues Cys-536 and Cys-541 are joined by a disulfide bond. Residue Asn-546 is glycosylated (N-linked (GlcNAc...) asparagine). A disulfide bridge links Cys-550 with Cys-555. A helical transmembrane segment spans residues Phe-572–Pro-596. Ala-583, Ser-586, and Ser-587 together coordinate Na(+). Over Lys-597 to Pro-624 the chain is Cytoplasmic. 2 helical membrane-spanning segments follow: residues Leu-625 to Asn-645 and Val-646 to Phe-664. 2 residues coordinate chloride: Phe-655 and Tyr-659. Topologically, residues Ser-665–Trp-687 are cytoplasmic. 2 consecutive transmembrane segments (helical) span residues Ile-688–Trp-705 and Trp-706–Leu-718. Over Tyr-719 to Ser-1191 the chain is Cytoplasmic. The interval Ser-734–Thr-751 is scissor helix. The disordered stretch occupies residues His-929–Glu-972. A compositionally biased stretch (low complexity) spans Ser-935–Pro-948. Position 1114 is a phosphothreonine (Thr-1114).

Belongs to the SLC12A transporter family. Homodimer. Phosphorylated at Thr-175, Thr-179 and Thr-184 by OXSR1/OSR1 and STK39/SPAK downstream of WNK kinases (WNK1, WNK2, WNK3 or WNK4), promoting its activity. As to expression, strongly expressed in rectal gland, brain, gill and intestine. Also detected at lower levels in heart, kidney, and testis.

The protein localises to the basolateral cell membrane. The catalysed reaction is K(+)(out) + 2 chloride(out) + Na(+)(out) = K(+)(in) + 2 chloride(in) + Na(+)(in). With respect to regulation, activated following phosphorylation by OXSR1/OSR1 and STK39/SPAK. Inhibited by bumetanide. In terms of biological role, cation-chloride cotransporter which mediates the electroneutral transport of chloride, potassium and/or sodium ions across the membrane. Plays a vital role in the regulation of ionic balance and cell volume. This is Solute carrier family 12 member 2 (SLC12A2) from Squalus acanthias (Spiny dogfish).